The primary structure comprises 207 residues: Inhibitor of hydrogen peroxide resistance (207 aa).

The segment at residues 163–182 is a DNA-binding region (H-T-H motif); that stretch reads MNYIHQRTRVSRSVVAEVLA.

It belongs to the IprA family.

In terms of biological role, involved in oxidative stress resistance. This is Inhibitor of hydrogen peroxide resistance from Salmonella typhimurium (strain LT2 / SGSC1412 / ATCC 700720).